Consider the following 128-residue polypeptide: Aspartate 1-decarboxylase (128 aa).

The active-site Schiff-base intermediate with substrate; via pyruvic acid is serine 25. Residue serine 25 is modified to Pyruvic acid (Ser). Threonine 57 contacts substrate. Tyrosine 58 (proton donor) is an active-site residue. 73–75 (GSA) is a binding site for substrate.

Belongs to the PanD family. Heterooctamer of four alpha and four beta subunits. It depends on pyruvate as a cofactor. Post-translationally, is synthesized initially as an inactive proenzyme, which is activated by self-cleavage at a specific serine bond to produce a beta-subunit with a hydroxyl group at its C-terminus and an alpha-subunit with a pyruvoyl group at its N-terminus.

The protein localises to the cytoplasm. The catalysed reaction is L-aspartate + H(+) = beta-alanine + CO2. It functions in the pathway cofactor biosynthesis; (R)-pantothenate biosynthesis; beta-alanine from L-aspartate: step 1/1. In terms of biological role, catalyzes the pyruvoyl-dependent decarboxylation of aspartate to produce beta-alanine. This chain is Aspartate 1-decarboxylase, found in Paraburkholderia phytofirmans (strain DSM 17436 / LMG 22146 / PsJN) (Burkholderia phytofirmans).